The sequence spans 104 residues: Large ribosomal subunit protein uL24 (104 aa).

It belongs to the universal ribosomal protein uL24 family. Part of the 50S ribosomal subunit.

One of two assembly initiator proteins, it binds directly to the 5'-end of the 23S rRNA, where it nucleates assembly of the 50S subunit. Its function is as follows. One of the proteins that surrounds the polypeptide exit tunnel on the outside of the subunit. In Pseudoalteromonas atlantica (strain T6c / ATCC BAA-1087), this protein is Large ribosomal subunit protein uL24.